A 211-amino-acid polypeptide reads, in one-letter code: Ubiquitin-conjugating enzyme E2 S-B (211 aa).

The UBC core domain maps to 11–157 (HIIRRVYKEV…ARLMTDIHAQ (147 aa)). Cysteine 95 serves as the catalytic Glycyl thioester intermediate. Positions 158-211 (GTSLRGKDPTDPCSSASTPVVSGDGPMAKKHAGDRDKKLAAKKKTDKKRALRRL) are disordered. Over residues 197–211 (AAKKKTDKKRALRRL) the composition is skewed to basic residues.

This sequence belongs to the ubiquitin-conjugating enzyme family.

It carries out the reaction S-ubiquitinyl-[E1 ubiquitin-activating enzyme]-L-cysteine + [E2 ubiquitin-conjugating enzyme]-L-cysteine = [E1 ubiquitin-activating enzyme]-L-cysteine + S-ubiquitinyl-[E2 ubiquitin-conjugating enzyme]-L-cysteine.. It participates in protein modification; protein ubiquitination. Catalyzes the covalent attachment of ubiquitin to other proteins. Acts as an essential factor of the anaphase promoting complex/cyclosome (APC/C), a cell cycle-regulated ubiquitin ligase that controls progression through mitosis. Acts by specifically elongating 'Lys-11'-linked polyubiquitin chains initiated by the E2 enzyme ube2c/ubch10 on APC/C substrates, enhancing the degradation of APC/C substrates by the proteasome and promoting mitotic exit. The protein is Ubiquitin-conjugating enzyme E2 S-B (ube2s-b) of Xenopus laevis (African clawed frog).